Reading from the N-terminus, the 520-residue chain is Cytochrome P450 monooxygenase oblB (520 aa).

The next 3 membrane-spanning stretches (helical) occupy residues 17-37 (VAVI…RLFL), 229-249 (LFMG…SILA), and 320-340 (IGTG…HIVV). Cys-462 contacts heme.

The protein belongs to the cytochrome P450 family. Requires heme as cofactor.

Its subcellular location is the membrane. It participates in secondary metabolite biosynthesis; terpenoid biosynthesis. Cytochrome P450 monooxygenase; part of the gene cluster that mediates the biosynthesis of the sesterterpenes ophiobolins, fungal phytotoxins with potential anti-cancer activities. The first step of the pathway is performed by the sesterterpene synthase oblA that possesses both prenyl transferase and terpene cyclase activity, converting isopentenyl diphosphate and dimethylallyl diphosphate into geranylfarnesyl diphosphate (GFPP) and further converting GFPP into ophiobolin F, respectively. Other sesterterpenoids (C(25) terpenoids) are found as minor products of oblA. It is expected that ophiobolin F is then oxidized to ophiobolin A via ophiobolin C and ophiobolin B intermediates by the combined action of the cytochrome P450 monooxygenase oblB and the FAD-dependent oxidoreductase oblC. Although oblB catalyzes multistep oxygenations at C5 and C21/C7 in a relatively efficient manner, it is unable to convert ophiobolin F to ophiobolin C and produces instead several unexpected derivatives. The sequence is that of Cytochrome P450 monooxygenase oblB from Aspergillus clavatus (strain ATCC 1007 / CBS 513.65 / DSM 816 / NCTC 3887 / NRRL 1 / QM 1276 / 107).